The following is a 544-amino-acid chain: Inward rectifier potassium channel irk-1 (544 aa).

The Cytoplasmic portion of the chain corresponds to 1-109 (MTLSVPDCAE…IFTTMIDVKW (109 aa)). Residues 110–134 (RWMLMLFASAFVLSWSIFGTTYYLI) form a helical membrane-spanning segment. Residues 135–158 (ALVHGDLSLPTPVNHTACVMNLDS) lie on the Extracellular side of the membrane. Positions 159–170 (VYSSFLFAVETH) form an intramembrane region, helical; Pore-forming. Residues 171-177 (HTIGYGH) constitute an intramembrane region (pore-forming). Positions 172 to 177 (TIGYGH) match the Selectivity filter motif. Over 178-186 (RYITTECYL) the chain is Extracellular. A helical transmembrane segment spans residues 187–208 (AGAIVCLQAICALLLQSFMVGI). Residues 209 to 544 (VFAKMARPKK…PIHIEIVSET (336 aa)) lie on the Cytoplasmic side of the membrane. Disordered stretches follow at residues 411 to 448 (HKLE…NSPV) and 512 to 533 (LSDL…SPPV). The span at 438-448 (NHFQSSSNSPV) shows a compositional bias: polar residues.

This sequence belongs to the inward rectifier-type potassium channel (TC 1.A.2.1) family. Expressed in neurons in the head and tail with no expression detected in non-neuronal cells in these regions. Also detected in the egg-laying system of adult hermaphordites with strong expression in the HSN motor neurons and weak expression in vulval muscles.

It is found in the membrane. The protein resides in the perikaryon. Its subcellular location is the cell projection. In terms of biological role, inward rectifier potassium channels are characterized by a greater tendency to allow potassium to flow into the cell rather than out of it. Required for modulation of the activity of the hermaphrodite-specific neurons (HSNs) by the G-protein coupled neuropeptide receptor egl-6 which in turn controls egg-laying behavior. This is Inward rectifier potassium channel irk-1 (irk-1) from Caenorhabditis elegans.